Here is a 90-residue protein sequence, read N- to C-terminus: Probable small nuclear ribonucleoprotein F (90 aa).

Positions 7–80 (NPRPFLQDLV…VLYIKKADEA (74 aa)) constitute a Sm domain.

Belongs to the snRNP Sm proteins family. SmF/LSm6 subfamily.

The protein localises to the nucleus. It localises to the cytoplasm. In terms of biological role, plays a role in pre-mRNA splicing as a core component of the spliceosomal U1, U2, U4 and U5 small nuclear ribonucleoproteins (snRNPs), the building blocks of the spliceosome. The protein is Probable small nuclear ribonucleoprotein F of Neurospora crassa (strain ATCC 24698 / 74-OR23-1A / CBS 708.71 / DSM 1257 / FGSC 987).